A 346-amino-acid chain; its full sequence is Phosphoribosylformylglycinamidine cyclo-ligase (346 aa).

The protein belongs to the AIR synthase family.

It localises to the cytoplasm. The enzyme catalyses 2-formamido-N(1)-(5-O-phospho-beta-D-ribosyl)acetamidine + ATP = 5-amino-1-(5-phospho-beta-D-ribosyl)imidazole + ADP + phosphate + H(+). The protein operates within purine metabolism; IMP biosynthesis via de novo pathway; 5-amino-1-(5-phospho-D-ribosyl)imidazole from N(2)-formyl-N(1)-(5-phospho-D-ribosyl)glycinamide: step 2/2. The sequence is that of Phosphoribosylformylglycinamidine cyclo-ligase from Vibrio parahaemolyticus serotype O3:K6 (strain RIMD 2210633).